A 122-amino-acid chain; its full sequence is Ribonuclease P protein component 1 (122 aa).

The protein belongs to the eukaryotic/archaeal RNase P protein component 1 family. In terms of assembly, consists of a catalytic RNA component and at least 4-5 protein subunits.

Its subcellular location is the cytoplasm. The catalysed reaction is Endonucleolytic cleavage of RNA, removing 5'-extranucleotides from tRNA precursor.. Functionally, part of ribonuclease P, a protein complex that generates mature tRNA molecules by cleaving their 5'-ends. The chain is Ribonuclease P protein component 1 from Thermococcus sibiricus (strain DSM 12597 / MM 739).